Reading from the N-terminus, the 79-residue chain is MAEAGARRPFFRRRKTCPFTGPNAPKIDYKDSKLLMRYVSERGKIVPSRITAVSAKKQRELARAIKRARFLGLLPYVIR.

Belongs to the bacterial ribosomal protein bS18 family. Part of the 30S ribosomal subunit. Forms a tight heterodimer with protein bS6.

In terms of biological role, binds as a heterodimer with protein bS6 to the central domain of the 16S rRNA, where it helps stabilize the platform of the 30S subunit. The sequence is that of Small ribosomal subunit protein bS18 from Rhodopseudomonas palustris (strain HaA2).